A 519-amino-acid chain; its full sequence is Na(+)/H(+) exchange regulatory cofactor NHE-RF3 (519 aa).

Residues 9-90 (ECKLSKQEGQ…SVTLLVLDGD (82 aa)) form the PDZ 1 domain. Phosphoserine occurs at positions 108, 148, 192, 250, 334, and 348. PDZ domains are found at residues 128-215 (EPCA…VDKE) and 243-323 (VVVI…LDKE). The tract at residues 348 to 374 (SVKEGPAPIPAPLEATGSEPTEDAEGH) is disordered. The region spanning 378 to 458 (LCRLLKEDDS…HVTLLVCGKM (81 aa)) is the PDZ 4 domain. Phosphothreonine occurs at positions 451 and 488. The disordered stretch occupies residues 479–519 (VAGPDEKGETSAESEHDAHPAKDRTLSTASHSSSNSEDTEM). Residues 482–503 (PDEKGETSAESEHDAHPAKDRT) show a composition bias toward basic and acidic residues. Phosphoserine occurs at positions 489 and 492. T503 carries the post-translational modification Phosphothreonine. A compositionally biased stretch (low complexity) spans 505 to 519 (STASHSSSNSEDTEM). Residues S508, S510, S511, S512, and S514 each carry the phosphoserine modification.

This sequence belongs to the NHER family. In terms of assembly, interacts with PDZK1IP1 and ABCC2. Binds to the C-terminal region of SLC26A3. Interacts (via C-terminal PDZ domain) with SLC26A6 (via C-terminal domain). Interacts (via C-terminal PDZ domain) with SLC9A3 (via C-terminal domain). Component of a complex, composed of PDZK1, SYNGAP1, KLHL17 and NMDA receptors. Interacts (via PDZ1 domain) directly with KLHL17; the interaction is important for integrity of actin cytoskeleton structures in neurons. Forms a heterodimeric complex with NHERF1. Interacts with AKAP2, BCR, CFTR, SLCO1A1, SLC22A12, SLC22A4, SLC22A5, SLC26A6, NHERF2 and SLC17A1. Interacts (via the first PDZ domain) with PTGIR (via non-isoprenylated C-terminus). Interacts (via PDZ domains 1 and 3) with SCARB1 (C-terminal domain). Interacts (via PDZ domains 1 and 3) with SLC5A8 (via PDZ-binding motif); interaction increases nicotinate transport activity of SLC5A8. Expressed in kidney, liver, small intestine. brain, lung, and testis (at protein level).

Its subcellular location is the membrane. It localises to the cell membrane. Its function is as follows. A scaffold protein that connects plasma membrane proteins and regulatory components, regulating their surface expression in epithelial cells apical domains. May be involved in the coordination of a diverse range of regulatory processes for ion transport and second messenger cascades. In complex with NHERF1, may cluster proteins that are functionally dependent in a mutual fashion and modulate the trafficking and the activity of the associated membrane proteins. May play a role in the cellular mechanisms associated with multidrug resistance through its interaction with ABCC2 and PDZK1IP1. May potentiate the CFTR chloride channel activity. Required for normal cell-surface expression of SCARB1. Plays a role in maintaining normal plasma cholesterol levels via its effects on SCARB1. Plays a role in the normal localization and function of the chloride-anion exchanger SLC26A6 to the plasma membrane in the brush border of the proximal tubule of the kidney. May be involved in the regulation of proximal tubular Na(+)-dependent inorganic phosphate cotransport therefore playing an important role in tubule function. The polypeptide is Na(+)/H(+) exchange regulatory cofactor NHE-RF3 (Pdzk1) (Mus musculus (Mouse)).